Reading from the N-terminus, the 1368-residue chain is DNA-directed RNA polymerase subunit beta (1368 aa).

It belongs to the RNA polymerase beta chain family. The RNAP catalytic core consists of 2 alpha, 1 beta, 1 beta' and 1 omega subunit. When a sigma factor is associated with the core the holoenzyme is formed, which can initiate transcription.

The enzyme catalyses RNA(n) + a ribonucleoside 5'-triphosphate = RNA(n+1) + diphosphate. DNA-dependent RNA polymerase catalyzes the transcription of DNA into RNA using the four ribonucleoside triphosphates as substrates. In Ralstonia pickettii (strain 12J), this protein is DNA-directed RNA polymerase subunit beta.